The following is a 359-amino-acid chain: GTP cyclohydrolase FolE2 (359 aa).

Belongs to the GTP cyclohydrolase IV family.

The enzyme catalyses GTP + H2O = 7,8-dihydroneopterin 3'-triphosphate + formate + H(+). The protein operates within cofactor biosynthesis; 7,8-dihydroneopterin triphosphate biosynthesis; 7,8-dihydroneopterin triphosphate from GTP: step 1/1. Its function is as follows. Converts GTP to 7,8-dihydroneopterin triphosphate. The protein is GTP cyclohydrolase FolE2 of Cereibacter sphaeroides (strain ATCC 17029 / ATH 2.4.9) (Rhodobacter sphaeroides).